Consider the following 386-residue polypeptide: Adiponectin receptor protein 2 (386 aa).

The segment at 1 to 71 (MNEPTENRLG…HEYSDEAPQE (71 aa)) is disordered. Over 1–147 (MNEPTENRLG…SIFRIHTETG (147 aa)) the chain is Cytoplasmic. The span at 15–41 (PEPDIRLRKGHQLDGTRRGDNDSHQGD) shows a compositional bias: basic and acidic residues. A helical membrane pass occupies residues 148 to 168 (NIWTHLLGCVFFLCLGIFYMF). At 169–181 (RPNISFVAPLQEK) the chain is on the extracellular side. The helical transmembrane segment at 182–202 (VVFGLFFLGAILCLSFSWLFH) threads the bilayer. Histidine 202 contacts Zn(2+). Residues 203–213 (TVYCHSEGVSR) are Cytoplasmic-facing. A helical transmembrane segment spans residues 214–234 (LFSKLDYSGIALLIMGSFVPW). The Extracellular portion of the chain corresponds to 235 to 245 (LYYSFYCNPQP). A helical transmembrane segment spans residues 246–266 (CFIYLIVICVLGIAAIIVSQW). The Cytoplasmic portion of the chain corresponds to 267–273 (DMFATPQ). The chain crosses the membrane as a helical span at residues 274–294 (YRGVRAGVFLGLGLSGIIPTL). Over 295 to 309 (HYVISEGFLKAATIG) the chain is Extracellular. A helical transmembrane segment spans residues 310–330 (QIGWLMLMASLYITGAALYAA). Residues 331 to 348 (RIPERFFPGKCDIWFHSH) are Cytoplasmic-facing. The Zn(2+) site is built by histidine 348 and histidine 352. A helical transmembrane segment spans residues 349 to 369 (QLFHIFVVAGAFVHFHGVSNL). Residues 370 to 386 (QEFRFMIGGGCSEEDAL) lie on the Extracellular side of the membrane.

It belongs to the ADIPOR family. May form homooligomers and heterooligomers with ADIPOR1. Interacts with APPL2 (via BAR domain); ADIPOQ dissociates this interaction. Ubiquitous. Highly expressed in skeletal muscle, liver and placenta. Weakly expressed in brain, heart, colon, spleen, kidney, thymus, small intestine, peripheral blood leukocytes and lung.

Its subcellular location is the cell membrane. Its function is as follows. Receptor for ADIPOQ, an essential hormone secreted by adipocytes that regulates glucose and lipid metabolism. Required for normal body fat and glucose homeostasis. ADIPOQ-binding activates a signaling cascade that leads to increased PPARA activity, and ultimately to increased fatty acid oxidation and glucose uptake. Has intermediate affinity for globular and full-length adiponectin. Required for normal revascularization after chronic ischemia caused by severing of blood vessels. The polypeptide is Adiponectin receptor protein 2 (Homo sapiens (Human)).